Reading from the N-terminus, the 114-residue chain is Flagellar hook-basal body complex protein FliE (114 aa).

This sequence belongs to the FliE family.

It is found in the bacterial flagellum basal body. This is Flagellar hook-basal body complex protein FliE from Burkholderia vietnamiensis (strain G4 / LMG 22486) (Burkholderia cepacia (strain R1808)).